The primary structure comprises 618 residues: Indolepyruvate oxidoreductase subunit IorA (618 aa).

4Fe-4S ferredoxin-type domains follow at residues 559–590 and 588–617; these read RPVR…DGRV and GRVF…PEGK. Positions 568, 571, 574, 580, 597, 600, 603, and 607 each coordinate [4Fe-4S] cluster.

In terms of assembly, heterodimer of the IorA and IorB subunits. It depends on [4Fe-4S] cluster as a cofactor.

It carries out the reaction indole-3-pyruvate + 2 oxidized [2Fe-2S]-[ferredoxin] + CoA = (indol-3-yl)acetyl-CoA + 2 reduced [2Fe-2S]-[ferredoxin] + CO2 + H(+). Catalyzes the ferredoxin-dependent oxidative decarboxylation of arylpyruvates. This is Indolepyruvate oxidoreductase subunit IorA (iorA) from Methanothermobacter marburgensis (strain ATCC BAA-927 / DSM 2133 / JCM 14651 / NBRC 100331 / OCM 82 / Marburg) (Methanobacterium thermoautotrophicum).